Reading from the N-terminus, the 100-residue chain is MSSQFLLAFFLVLLVLGYEVQGAQGLQQDDPGSPALFGKVQESISSYWDTAKAAAQELYQKTYLTSVDEKLRDMYSKSSAAMSTYAGIFTDQLFTLLKGE.

An N-terminal signal peptide occupies residues M1–G22. Residues S66–M74 are lipid binding. Residues S78–E100 are lipoprotein lipase cofactor.

This sequence belongs to the apolipoprotein C2 family. In terms of processing, proapolipoprotein C-II is synthesized as a sialic acid containing glycoprotein which is subsequently desialylated prior to its proteolytic processing. Post-translationally, proapolipoprotein C-II, the major form found in plasma undergoes proteolytic cleavage of its N-terminal hexapeptide to generate the mature form apolipoprotein C-II, which occurs as the minor form in plasma.

It localises to the secreted. Functionally, component of chylomicrons, very low-density lipoproteins (VLDL), low-density lipoproteins (LDL), and high-density lipoproteins (HDL) in plasma. Plays an important role in lipoprotein metabolism as an activator of lipoprotein lipase. The protein is Apolipoprotein C-II (APOC2) of Cricetulus griseus (Chinese hamster).